We begin with the raw amino-acid sequence, 1034 residues long: Ubiquitin-like-specific protease 2 (1034 aa).

6 disordered regions span residues 1-42 (MSAR…FRKD), 71-110 (IELS…HSSL), 388-419 (SHAV…DDAT), 731-800 (IDQS…PIRH), 841-960 (GVSS…DSLG), and 983-1034 (SSPT…DEDP). Residues 19-33 (SSRASSPRSSASLPP) show a composition bias toward low complexity. Acidic residues predominate over residues 74 to 85 (SDNDVDNNDEGE). Low complexity predominate over residues 743–756 (TSEPPCSRSSSIST). The residue at position 788 (S788) is a Phosphoserine. Polar residues-rich tracts occupy residues 845 to 856 (PIKNDQALSSTH), 876 to 904 (QLSS…VISD), and 912 to 923 (GVNSESKNTSGI). Residue S903 is modified to Phosphoserine. Phosphoserine is present on residues S983 and S984. The segment covering 992–1017 (TSATSKGSNAQLLSNYGDENNQSQDS) has biased composition (polar residues).

This sequence belongs to the peptidase C48 family.

Insertion mutation in SMT4 confers temperature and benomyl sensitivity; high copy suppressor of a temperature sensitive mutation in MIF2. The chain is Ubiquitin-like-specific protease 2 (ULP2) from Saccharomyces cerevisiae (strain ATCC 204508 / S288c) (Baker's yeast).